Consider the following 449-residue polypeptide: C4-dicarboxylate transport protein (449 aa).

Residues 1–20 (MSALTESFGPVPSAKSKPPA) form a disordered region. Residues 10 to 20 (PVPSAKSKPPA) are compositionally biased toward low complexity. The next 8 membrane-spanning stretches (helical) occupy residues 28–48 (LLYL…WLSP), 66–86 (LIKM…IAHI), 101–121 (LYFE…GNVV), 167–187 (GDIL…MTLG), 205–225 (FGVI…AMAF), 241–261 (LIAV…GLIA), 326–346 (IYMT…LTWT), and 370–390 (FITL…GMAI).

Belongs to the dicarboxylate/amino acid:cation symporter (DAACS) (TC 2.A.23) family.

The protein resides in the cell inner membrane. Functionally, responsible for the transport of dicarboxylates such as succinate, fumarate, and malate from the periplasm across the membrane. The polypeptide is C4-dicarboxylate transport protein (Rhodopseudomonas palustris (strain BisB18)).